The following is a 376-amino-acid chain: MTNDVIALAQALIQRESVTPEDAGCQQMMNDRLQAVGFNIESLFFTDTLNTWARKGTQSPHFCFAGHTDVVPTGPEKNWQYPPFSGLVENGLLHGRGAADMKGSLAAMLVATERFVTKHPDHKGSISFLITSDEEGPFINGTTRVIDTLEARGEKIDMCLVGEPSSRDVLGDVVKNGRRGSLTGFLTVKGIQGHVAYPQLAQNPIHLTTPALTELSQTVWDHGNEYFPATSFQISNINGGTGAGNVIPGELEVQFNFRFSTEVTHTQLQQRVNAILQQHNLNYELSWIVNGQPFLTEHGPLVDATVKAIKSVTGLTTNLETTGGTSDGRFIAQTGAKVIELGPRNATIHKVDECVSTDDLIALCDIYEQILENLLT.

H67 serves as a coordination point for Zn(2+). The active site involves D69. A Zn(2+)-binding site is contributed by D100. The active-site Proton acceptor is the E134. E135, E163, and H349 together coordinate Zn(2+).

This sequence belongs to the peptidase M20A family. DapE subfamily. In terms of assembly, homodimer. Zn(2+) serves as cofactor. The cofactor is Co(2+).

The catalysed reaction is N-succinyl-(2S,6S)-2,6-diaminopimelate + H2O = (2S,6S)-2,6-diaminopimelate + succinate. The protein operates within amino-acid biosynthesis; L-lysine biosynthesis via DAP pathway; LL-2,6-diaminopimelate from (S)-tetrahydrodipicolinate (succinylase route): step 3/3. In terms of biological role, catalyzes the hydrolysis of N-succinyl-L,L-diaminopimelic acid (SDAP), forming succinate and LL-2,6-diaminopimelate (DAP), an intermediate involved in the bacterial biosynthesis of lysine and meso-diaminopimelic acid, an essential component of bacterial cell walls. The sequence is that of Succinyl-diaminopimelate desuccinylase from Pseudoalteromonas translucida (strain TAC 125).